The primary structure comprises 414 residues: Serine/threonine-protein kinase 32B (414 aa).

The region spanning 23–283 is the Protein kinase domain; that stretch reads FQILRAIGKG…LHDIQSVPYL (261 aa). Residues 29–37 and Lys52 each bind ATP; that span reads IGKGSFGKV. Residue Asp146 is the Proton acceptor of the active site. Residues 374–396 are disordered; sequence QGQGSQLLDTDSRGGGQAQSKLQ.

Belongs to the protein kinase superfamily. Ser/Thr protein kinase family. Mg(2+) is required as a cofactor.

The enzyme catalyses L-seryl-[protein] + ATP = O-phospho-L-seryl-[protein] + ADP + H(+). The catalysed reaction is L-threonyl-[protein] + ATP = O-phospho-L-threonyl-[protein] + ADP + H(+). This Homo sapiens (Human) protein is Serine/threonine-protein kinase 32B.